The chain runs to 289 residues: D-psicose 3-epimerase (289 aa).

2 residues coordinate substrate: Y6 and A107. The Proton donor/acceptor role is filled by E150. E150 is a binding site for Mn(2+). Substrate-binding positions include E156 and 183-186; that span reads DTFH. Residues D183 and H209 each contribute to the Mn(2+) site. R215 provides a ligand contact to substrate. The active-site Proton donor/acceptor is the E244. E244 contacts Mn(2+).

It belongs to the hyi family. As to quaternary structure, homotetramer. Mn(2+) is required as a cofactor. The cofactor is Co(2+).

It carries out the reaction D-allulose = keto-D-fructose. With respect to regulation, inhibited by Zn(2+) and Cu(2+). Involved in the biosynthesis of D-psicose. Catalyzes the reversible epimerization of D-fructose at the C3 position to yield D-psicose. The enzyme is highly specific for D-psicose and shows very low activity with D-tagatose. The substrate specificity decreases in the following order: D-fructose, D-tagatose, D-ribulose, D-xylulose, and D-sorbose. It shows a higher level of activity for cis ketoses than for trans-ketoses. The protein is D-psicose 3-epimerase (dpe) of Agrobacterium fabrum (strain C58 / ATCC 33970) (Agrobacterium tumefaciens (strain C58)).